The sequence spans 487 residues: Homeobox protein homothorax (487 aa).

3 disordered regions span residues 25-49 (YDPH…HMTH), 210-292 (DTTK…SSLN), and 333-369 (NFGT…QKKR). Positions 127 to 211 (GGDVCSSESF…IDLVIDERDT (85 aa)) constitute an MEIS N-terminal domain. Polar residues-rich tracts occupy residues 227-237 (NADSTSHTDGA) and 333-345 (NFGT…ASNA). A DNA-binding region (homeobox; TALE-type) is located at residues 365 to 427 (NQKKRGIFPK…NARRRIVQPM (63 aa)).

Belongs to the TALE/MEIS homeobox family. In terms of assembly, interacts with exd; required for nuclear translocation of exd. In the wing disk, the expression is present in the regions corresponding to notum, wing hinge and ventral pleura. In the leg disk, the expression is in the periphery region, corresponding to the proximal segments of the legs. In the antennal disk, the expression is in all but the arista region. In the eye disk, the expression is strong in the anterior region surrounding the eye field, including the regions corresponding to ptilinum, ocellus and head capsules, and weak in the posterior and lateral margins of the eye disk. Expressed specifically in maturating inner photoreceptors of the DRA and maintained through adulthood.

It is found in the nucleus. In terms of biological role, all isoforms are required for patterning of the embryonic cuticle. Acts with exd to delimit the eye field and prevent inappropriate eye development. Isoforms that carry the homeodomain are required for proper localization of chordotonal organs within the peripheral nervous system and antennal identity; required to activate antennal-specific genes, such as sal and to repress the leg-like expression of dac. Necessary for the nuclear localization of the essential HOX cofactor, extradenticle (exd). Both necessary and sufficient for inner photoreceptors to adopt the polarization-sensitive 'dorsal rim area' (DRA) of the eye fate instead of the color-sensitive default state. This occurs by increasing rhabdomere size and uncoupling R7-R8 communication to allow both cells to express the same opsin rather than different ones as required for color vision. This is Homeobox protein homothorax from Drosophila melanogaster (Fruit fly).